A 276-amino-acid chain; its full sequence is Light-independent protochlorophyllide reductase iron-sulfur ATP-binding protein (276 aa).

ATP contacts are provided by residues 12–17 (GIGKST) and K41. S16 contacts Mg(2+). 2 residues coordinate [4Fe-4S] cluster: C97 and C131. 182-183 (NR) is an ATP binding site.

The protein belongs to the NifH/BchL/ChlL family. As to quaternary structure, homodimer. Protochlorophyllide reductase is composed of three subunits; BchL, BchN and BchB. Requires [4Fe-4S] cluster as cofactor.

The catalysed reaction is chlorophyllide a + oxidized 2[4Fe-4S]-[ferredoxin] + 2 ADP + 2 phosphate = protochlorophyllide a + reduced 2[4Fe-4S]-[ferredoxin] + 2 ATP + 2 H2O. The protein operates within porphyrin-containing compound metabolism; bacteriochlorophyll biosynthesis (light-independent). Functionally, component of the dark-operative protochlorophyllide reductase (DPOR) that uses Mg-ATP and reduced ferredoxin to reduce ring D of protochlorophyllide (Pchlide) to form chlorophyllide a (Chlide). This reaction is light-independent. The L component serves as a unique electron donor to the NB-component of the complex, and binds Mg-ATP. The polypeptide is Light-independent protochlorophyllide reductase iron-sulfur ATP-binding protein (Chlorobium luteolum (strain DSM 273 / BCRC 81028 / 2530) (Pelodictyon luteolum)).